The following is a 218-amino-acid chain: Cytochrome c biogenesis ATP-binding export protein CcmA (218 aa).

The ABC transporter domain occupies 2–217 (LEAKNLTCIR…KSCLSACCAV (216 aa)). Residue 34-41 (GPNGAGKT) participates in ATP binding.

Belongs to the ABC transporter superfamily. CcmA exporter (TC 3.A.1.107) family. As to quaternary structure, the complex is composed of two ATP-binding proteins (CcmA) and two transmembrane proteins (CcmB).

It is found in the cell inner membrane. It catalyses the reaction heme b(in) + ATP + H2O = heme b(out) + ADP + phosphate + H(+). In terms of biological role, part of the ABC transporter complex CcmAB involved in the biogenesis of c-type cytochromes; once thought to export heme, this seems not to be the case, but its exact role is uncertain. Responsible for energy coupling to the transport system. This chain is Cytochrome c biogenesis ATP-binding export protein CcmA, found in Yersinia pestis.